The chain runs to 95 residues: DNA-directed RNA polymerase subunit Rpo6 (95 aa).

The protein belongs to the archaeal Rpo6/eukaryotic RPB6 RNA polymerase subunit family. Part of the 13-subunit RNA polymerase complex.

The protein localises to the cytoplasm. The catalysed reaction is RNA(n) + a ribonucleoside 5'-triphosphate = RNA(n+1) + diphosphate. Its function is as follows. DNA-dependent RNA polymerase (RNAP) catalyzes the transcription of DNA into RNA using the four ribonucleoside triphosphates as substrates. This chain is DNA-directed RNA polymerase subunit Rpo6, found in Saccharolobus solfataricus (strain ATCC 35092 / DSM 1617 / JCM 11322 / P2) (Sulfolobus solfataricus).